The sequence spans 49 residues: Small, acid-soluble spore protein O (49 aa).

The interval Met1 to Gln49 is disordered.

Belongs to the SspO family.

The protein resides in the spore core. The polypeptide is Small, acid-soluble spore protein O (Anoxybacillus flavithermus (strain DSM 21510 / WK1)).